A 256-amino-acid chain; its full sequence is MAQYDPVLLSVDKHVALITVNDPDRRNAVTDEMSAQLRAAIQRAEGDPDVHAVVVTGAGKAFCAGADLSALGAGVGDPAEPRLLRLYDGFMAVSSCNLPTIAAVNGAAVGAGLNLALAADVRIAGPAALFDARFQKLGLHPGGGATWMLQRAVGPQVARAALLFGMCFDAESAVRHGLALMVADDPVTAALELAAGPAAAPREVVLASKATMRATASPGSLDLEQHELAKRLELGPQAKSVQSPEFAARLAAAQHR.

The interval 235 to 256 (GPQAKSVQSPEFAARLAAAQHR) is disordered.

It belongs to the enoyl-CoA hydratase/isomerase family.

It catalyses the reaction a (3S)-3-hydroxyacyl-CoA = a (2E)-enoyl-CoA + H2O. It carries out the reaction a 4-saturated-(3S)-3-hydroxyacyl-CoA = a (3E)-enoyl-CoA + H2O. Could possibly oxidize fatty acids using specific components. The chain is Probable enoyl-CoA hydratase echA14 (echA14) from Mycobacterium tuberculosis (strain CDC 1551 / Oshkosh).